A 172-amino-acid chain; its full sequence is CD-NTase-associated protein 7 (172 aa).

The tract at residues 141-172 (AQSPGINGYLENDKTYSAGGRSLTRTSVRNFV) is required for binding to CdnC and to confer phage immunity.

This sequence belongs to the bacterial HORMA family. HORMA1 subfamily. As to quaternary structure, forms complexes with CdnC with 1:1 and 2:2 stoichimetry, and a 1:1:6 CdnC:Cap7:Cap6 complex.

In terms of biological role, sensor protein of a CBASS antivirus system. CBASS (cyclic oligonucleotide-based antiphage signaling system) provides immunity against bacteriophage. The CD-NTase protein synthesizes cyclic nucleotides in response to infection; these serve as specific second messenger signals. The signals activate a diverse range of effectors, leading to bacterial cell death and thus abortive phage infection. A type III-C(AAA) CBASS system. Binds to a closure peptide (consensus His-Xaa-Xaa-Ile-Leu-Leu-Thr), which allows it to activate CdnC for second messenger synthesis. Its function is as follows. Protects E.coli strain JP313 against bacteriophage lambda cI- infection. When the cdnC-cap7-cap6-nucC operon is transformed into a susceptible strain it confers bacteriophage immunity. Mutations in the sensor (Cap7 also called HORMA) or effector proteins (CdnC, NucC) but not the disassembly protein (Cap6 also called Trip13) no longer confer immunity. The presence of the intact operon leads to culture collapse and cell death, which occurs before the phage has finished its replication cycle, thus protecting non-infected bacteria by aborting the phage infection and preventing its propagation. The protein is CD-NTase-associated protein 7 of Escherichia coli (strain MS 115-1).